We begin with the raw amino-acid sequence, 615 residues long: DNA mismatch repair protein MutL (615 aa).

The interval H362 to Y397 is disordered. Residues A373 to P391 are compositionally biased toward low complexity.

This sequence belongs to the DNA mismatch repair MutL/HexB family.

In terms of biological role, this protein is involved in the repair of mismatches in DNA. It is required for dam-dependent methyl-directed DNA mismatch repair. May act as a 'molecular matchmaker', a protein that promotes the formation of a stable complex between two or more DNA-binding proteins in an ATP-dependent manner without itself being part of a final effector complex. The polypeptide is DNA mismatch repair protein MutL (Escherichia coli O45:K1 (strain S88 / ExPEC)).